We begin with the raw amino-acid sequence, 143 residues long: Small ribosomal subunit protein uS12B (143 aa).

A 3,4-dihydroxyproline modification is found at Pro62.

It belongs to the universal ribosomal protein uS12 family. As to quaternary structure, component of the small ribosomal subunit (SSU). Mature yeast ribosomes consist of a small (40S) and a large (60S) subunit. The 40S small subunit contains 1 molecule of ribosomal RNA (18S rRNA) and at least 33 different proteins. The large 60S subunit contains 3 rRNA molecules (25S, 5.8S and 5S rRNA) and at least 46 different proteins. Hydroxylation at Pro-62 affects translation termination efficiency.

It is found in the cytoplasm. It localises to the nucleus. The protein localises to the nucleolus. Its function is as follows. Component of the ribosome, a large ribonucleoprotein complex responsible for the synthesis of proteins in the cell. The small ribosomal subunit (SSU) binds messenger RNAs (mRNAs) and translates the encoded message by selecting cognate aminoacyl-transfer RNA (tRNA) molecules. The large subunit (LSU) contains the ribosomal catalytic site termed the peptidyl transferase center (PTC), which catalyzes the formation of peptide bonds, thereby polymerizing the amino acids delivered by tRNAs into a polypeptide chain. The nascent polypeptides leave the ribosome through a tunnel in the LSU and interact with protein factors that function in enzymatic processing, targeting, and the membrane insertion of nascent chains at the exit of the ribosomal tunnel. The protein is Small ribosomal subunit protein uS12B (rps2302) of Schizosaccharomyces pombe (strain 972 / ATCC 24843) (Fission yeast).